The sequence spans 186 residues: ADP-ribosylation factor-like protein DDB_G0292332 (186 aa).

GTP-binding positions include 24-31, 78-82, and 138-141; these read GVENVGKT, DIGGK, and NKQD.

Belongs to the small GTPase superfamily. Arf family.

In terms of biological role, binds and exchanges GTP and GDP. The polypeptide is ADP-ribosylation factor-like protein DDB_G0292332 (Dictyostelium discoideum (Social amoeba)).